The sequence spans 146 residues: Ribosome maturation factor RimP (146 aa).

The protein belongs to the RimP family.

It is found in the cytoplasm. Required for maturation of 30S ribosomal subunits. The protein is Ribosome maturation factor RimP of Helicobacter pylori (strain J99 / ATCC 700824) (Campylobacter pylori J99).